Here is a 432-residue protein sequence, read N- to C-terminus: Interleukin-11 receptor subunit alpha-2 (432 aa).

The signal sequence occupies residues 1–23; it reads MSSSCSGLTRVLVAVATALVSSS. The Extracellular portion of the chain corresponds to 24 to 372; it reads SPCPQAWGPP…DPLEQVAVLA (349 aa). The Ig-like C2-type domain maps to 27 to 110; it reads PQAWGPPGVQ…SGGMVTLKLG (84 aa). Intrachain disulfides connect Cys-48–Cys-94, Cys-120–Cys-130, and Cys-170–Cys-180. 2 consecutive Fibronectin type-III domains span residues 112 to 219 and 220 to 317; these read PPAR…LRPD and PPQG…TPST. Asn-127 carries an N-linked (GlcNAc...) asparagine glycan. A disordered region spans residues 151–170; sequence KTLPGAESQRESPSTGPWPC. The N-linked (GlcNAc...) asparagine glycan is linked to Asn-194. Residues 304–308 carry the WSXWS motif motif; it reads WSAWS. Residues 373 to 393 form a helical membrane-spanning segment; it reads SLGIFSCLGLAVGALALGLWL. Residues 394 to 432 lie on the Cytoplasmic side of the membrane; the sequence is RLRRSGKEGPQKPGLLAPMIPVEKLPGIPNLQRTPENFS.

The protein belongs to the type I cytokine receptor family. Type 3 subfamily. On ligand binding, forms a multimer complex with IL6ST/gp130. In terms of tissue distribution, expression restricted to testis, lymph node and thymus. Highest level in testis.

It localises to the membrane. Functionally, receptor for interleukin-11. The receptor systems for IL6, LIF, OSM, CNTF, IL11 and CT1 can utilize IL6ST for initiating signal transmission. The IL11/IL11RA/IL6ST complex may be involved in the control of proliferation and/or differentiation of skeletogenic progenitor or other mesenchymal cells. This chain is Interleukin-11 receptor subunit alpha-2 (Il11ra2), found in Mus musculus (Mouse).